The chain runs to 443 residues: Major royal jelly protein 7 (443 aa).

Residues 1–17 (MTRWLFMVACLGIACQG) form the signal peptide. N-linked (GlcNAc...) asparagine glycans are attached at residues asparagine 145, asparagine 161, asparagine 178, and asparagine 321.

Belongs to the major royal jelly protein family. In terms of tissue distribution, found in and secreted from the hypopharyngeal glands of the worker honey bee (at protein level); expression peaks at 12 days post eclosion. Expressed in the brains of adult worker bees peaking at 12 days post eclosion (at protein level). Expressed in the spermatheca of adult queen bees (at protein level); Expression levels are higher in mated queens than in virgin queens.

It is found in the secreted. Component of royal jelly, a substance produced in the hypopharyngeal gland containing proteins, free amino acids, fatty acids, sugars and other nutrients, which is fed to developing larvae by worker nurse bees. All larvae are fed some royal jelly (also known as worker jelly) early in their development but it forms the principal source of nutrition for larvae destined to become queen bees. Produced in the spermatheca of adult queen bees, along with other major royal jelly proteins, where it may act as a nutrient supply for sperm stored by mated queens, or be involved in energy metabolism. The polypeptide is Major royal jelly protein 7 (Apis mellifera (Honeybee)).